We begin with the raw amino-acid sequence, 666 residues long: E3 ubiquitin-protein ligase MBR2 (666 aa).

4 stretches are compositionally biased toward polar residues: residues 1–14 (MQGPRSTGDSSTGI), 23–35 (CSTNSETTSNNIL), 42–58 (FPNNTTGSGRPTYASSS), and 73–88 (SSSRLGPSDHLNSNGS). 6 disordered regions span residues 1-58 (MQGP…ASSS), 73-95 (SSSRLGPSDHLNSNGSKTDRQLL), 155-179 (SLGSSSQTAEERSSGPGSSLGGLGS), 221-329 (SSLS…DGQP), 400-433 (NPSTSGDSPFVPRAGSSSGIHGLQPNPTWVTPHN), and 457-491 (GASLPLLPTGPSVSSNEAAAPSGSSSRSHRSRQRR). A compositionally biased stretch (low complexity) spans 221–239 (SSLSLSMPSQNSPNVNNQS). 3 stretches are compositionally biased toward polar residues: residues 258-268 (AFPSTRSTETI), 286-303 (FSFTQSGSSVRQQQQLPA), and 414-433 (GSSSGIHGLQPNPTWVTPHN). Residues 619-660 (CCVCQEEYAEGDDLGTLGCGHEFHTACVKQWLMLKNLCPICK) form an RING-type; atypical zinc finger.

Belongs to the RING-type zinc finger family. Interacts with MED25 and UBC11.

It catalyses the reaction S-ubiquitinyl-[E2 ubiquitin-conjugating enzyme]-L-cysteine + [acceptor protein]-L-lysine = [E2 ubiquitin-conjugating enzyme]-L-cysteine + N(6)-ubiquitinyl-[acceptor protein]-L-lysine.. It functions in the pathway protein modification; protein ubiquitination. Its function is as follows. E3 ubiquitin-protein ligase that functions as a regulator of MED25 stability by targeting MED25 for degradation in a RING-H2-dependent way. Proteasome-dependent degradation of MED25 seems to activate its function as positive regulator of FLOWERING LOCUS T (FT) and is important to induce the expression of FT and consequently to promote flowering. May function downstream of HAL3 and be required for HAL3-regulated plant growth. Activation of MBR2 by HAL3 may lead to the degradation of cell cycle suppressors, resulting in enhancement of cell division and plant growth. The sequence is that of E3 ubiquitin-protein ligase MBR2 (MBR2) from Arabidopsis thaliana (Mouse-ear cress).